We begin with the raw amino-acid sequence, 364 residues long: Pre-small/secreted glycoprotein (364 aa).

An N-terminal signal peptide occupies residues 1–32; sequence MGVTGILQLPRDRFKRTSFFLWVIILFQRTFS. A glycan (N-linked (GlcNAc...) asparagine; by host) is linked at asparagine 40. 2 disulfides stabilise this stretch: cysteine 108/cysteine 135 and cysteine 121/cysteine 147. 5 N-linked (GlcNAc...) asparagine; by host glycosylation sites follow: asparagine 204, asparagine 228, asparagine 238, asparagine 257, and asparagine 268.

This sequence belongs to the filoviruses glycoprotein family. Homodimer; disulfide-linked. The homodimers are linked by two disulfide bonds in a parallel orientation. In terms of assembly, monomer. In terms of processing, this precursor is processed into mature sGP and delta-peptide by host furin or furin-like proteases. The cleavage site corresponds to the furin optimal cleavage sequence [KR]-X-[KR]-R. Post-translationally, N-glycosylated. O-glycosylated.

The protein localises to the secreted. Its function is as follows. Seems to possess an anti-inflammatory activity as it can reverse the barrier-decreasing effects of TNF alpha. Might therefore contribute to the lack of inflammatory reaction seen during infection in spite the of extensive necrosis and massive virus production. Does not seem to be involved in activation of primary macrophages. Does not seem to interact specifically with neutrophils. Viroporin that permeabilizes mammalian cell plasma membranes. It acts by altering permeation of ionic compounds and small molecules. This activity may lead to viral enterotoxic activity. The sequence is that of Pre-small/secreted glycoprotein (GP) from Zaire ebolavirus (strain Gabon-94) (ZEBOV).